We begin with the raw amino-acid sequence, 344 residues long: Geranylgeranyl transferase type-2 subunit alpha (344 aa).

6 PFTA repeats span residues 44-78 (YSEGNLKLTTELLDWNPETYSVWNYRREILLNDVF), 89-123 (LLDNELKYVLSKMKVFPKVYWIFNHRRWCLENAPY), 125-159 (NWNYEMMITEKLLSADARNFHGWHYRRYVVSQIER), 165-199 (LAKKEMEYTTSAIATNFSNFSALHNRTKLIETILN), 214-248 (ILEQELDMIHQAVFTDPDDSSVWIYHRWLMGHCNP), and 266-293 (YLQKEIELIQELHEMEPENRWCCESLVN).

Belongs to the protein prenyltransferase subunit alpha family. In terms of assembly, heterodimer of an alpha and a beta subunit.

It catalyses the reaction geranylgeranyl diphosphate + L-cysteinyl-[protein] = S-geranylgeranyl-L-cysteinyl-[protein] + diphosphate. Catalyzes the transfer of a geranyl-geranyl moiety from geranyl-geranyl pyrophosphate to proteins having the C-terminal-XCC or -XCXC, where both cysteines may become modified. In Schizosaccharomyces pombe (strain 972 / ATCC 24843) (Fission yeast), this protein is Geranylgeranyl transferase type-2 subunit alpha (bet4).